Reading from the N-terminus, the 348-residue chain is D-alanine--D-alanine ligase (348 aa).

One can recognise an ATP-grasp domain in the interval Lys132–Arg334. Residue Glu162–Glu217 coordinates ATP. Mg(2+) contacts are provided by Asp288, Glu301, and Asn303.

The protein belongs to the D-alanine--D-alanine ligase family. Mg(2+) is required as a cofactor. It depends on Mn(2+) as a cofactor.

It is found in the cytoplasm. It catalyses the reaction 2 D-alanine + ATP = D-alanyl-D-alanine + ADP + phosphate + H(+). Its pathway is cell wall biogenesis; peptidoglycan biosynthesis. In terms of biological role, cell wall formation. The sequence is that of D-alanine--D-alanine ligase from Streptococcus equi subsp. zooepidemicus (strain H70).